Consider the following 288-residue polypeptide: Protein sprouty homolog 3 (288 aa).

Residues 154–267 (KCVPCTAVRP…PGCRCKRHTN (114 aa)) enclose the SPR domain.

It belongs to the sprouty family. Interacts with TESK1. Interacts with USP11. Interacts with CAV1 (via C-terminus). Expressed in the brain with expression the highest in Purkinje cell bodies and projections in the cerebellum (at protein level). Also expressed in central and peripheral nervous system ganglion cells, superior cervical ganglion and dorsal root ganglion (at protein level). Expressed in the retinal ganglion cell layer and the inner nuclear layer (at protein level).

It is found in the cytoplasm. Inhibits neurite branching, arbor length and neurite complexity. Inhibits EGF-mediated p42/44 ERK signaling. Negatively regulates the MAPK cascade, resulting in a reduction of extracellular matrix protein accumulation. May function as an antagonist of fibroblast growth factor (FGF) pathways and may negatively modulate respiratory organogenesis. The chain is Protein sprouty homolog 3 from Mus musculus (Mouse).